The primary structure comprises 254 residues: Adenosine 5'-phosphosulfate reductase (254 aa).

The [4Fe-4S] cluster site is built by cysteine 131, cysteine 132, cysteine 212, and cysteine 215. Cysteine 238 (nucleophile; cysteine thiosulfonate intermediate) is an active-site residue.

It belongs to the PAPS reductase family. CysH subfamily. [4Fe-4S] cluster is required as a cofactor.

It localises to the cytoplasm. It catalyses the reaction [thioredoxin]-disulfide + sulfite + AMP + 2 H(+) = adenosine 5'-phosphosulfate + [thioredoxin]-dithiol. It functions in the pathway sulfur metabolism; hydrogen sulfide biosynthesis; sulfite from sulfate. In terms of biological role, catalyzes the formation of sulfite from adenosine 5'-phosphosulfate (APS) using thioredoxin as an electron donor. This Mesorhizobium japonicum (strain LMG 29417 / CECT 9101 / MAFF 303099) (Mesorhizobium loti (strain MAFF 303099)) protein is Adenosine 5'-phosphosulfate reductase.